Consider the following 588-residue polypeptide: Beta-(1--&gt;2)glucan export ATP-binding/permease protein NdvA (588 aa).

The region spanning 21–301 (VAVVVIANVI…MRQFVTQIFE (281 aa)) is the ABC transmembrane type-1 domain. 6 helical membrane-spanning segments follow: residues 22–42 (AVVV…PVLF), 57–77 (PILI…VAVA), 136–156 (THLA…AMDL), 158–178 (LSFV…WVMG), 248–268 (TAST…VKNG), and 272–292 (VGDV…LDQM). Residues 335 to 569 (VEFRNINFGF…GGRFTSLLRT (235 aa)) enclose the ABC transporter domain. 368 to 375 (GPTGAGKT) is a binding site for ATP.

The protein belongs to the ABC transporter superfamily. Beta-(1--&gt;2)glucan exporter (TC 3.A.1.108.1) family. In terms of assembly, homodimer.

The protein localises to the cell inner membrane. The enzyme catalyses [(1-&gt;2)-beta-D-glucosyl](n)(in) + ATP + H2O = [(1-&gt;2)-beta-D-glucosyl](n)(out) + ADP + phosphate + H(+). Its function is as follows. Involved in beta-(1--&gt;2)glucan export which is required for crown gall tumor formation. Transmembrane domains (TMD) form a pore in the inner membrane and the ATP-binding domain (NBD) is responsible for energy generation. The polypeptide is Beta-(1--&gt;2)glucan export ATP-binding/permease protein NdvA (Rhizobium radiobacter (Agrobacterium tumefaciens)).